The sequence spans 128 residues: Calcitonin gene-related peptide 1 (128 aa).

A signal peptide spans 1-25 (MGLWKSSPFLAFSILVLCQAGGLQA). Positions 26-80 (APFRSALEGLPDPTALSEKEGRLLLAALVKAYVQRKNELEQEQEQETEGSSITAQ) are excised as a propeptide. The interval 63–83 (ELEQEQEQETEGSSITAQKRS) is disordered. The span at 74-83 (GSSITAQKRS) shows a compositional bias: polar residues. Residues Cys-84 and Cys-89 are joined by a disulfide bond. Residue Phe-119 is modified to Phenylalanine amide. Positions 125–128 (DLRA) are excised as a propeptide.

This sequence belongs to the calcitonin family.

It localises to the secreted. CGRP1/CALCA is a peptide hormone that induces vasodilation mediated by the CALCRL-RAMP1 receptor complex. Dilates a variety of vessels including the coronary, cerebral and systemic vasculature. Its abundance in the CNS also points toward a neurotransmitter or neuromodulator role. It also elevates platelet cAMP. CGRP1 can also bind and activate CALCR-RAMP1 (AMYR1) receptor complex. This Canis lupus familiaris (Dog) protein is Calcitonin gene-related peptide 1 (CALCA).